The sequence spans 299 residues: Pyridoxal 5'-phosphate synthase subunit PdxS (299 aa).

Residue D24 participates in D-ribose 5-phosphate binding. K81 functions as the Schiff-base intermediate with D-ribose 5-phosphate in the catalytic mechanism. G153 provides a ligand contact to D-ribose 5-phosphate. R165 serves as a coordination point for D-glyceraldehyde 3-phosphate. D-ribose 5-phosphate-binding positions include G219 and 240-241; that span reads GS.

The protein belongs to the PdxS/SNZ family. In terms of assembly, in the presence of PdxT, forms a dodecamer of heterodimers.

It carries out the reaction aldehydo-D-ribose 5-phosphate + D-glyceraldehyde 3-phosphate + L-glutamine = pyridoxal 5'-phosphate + L-glutamate + phosphate + 3 H2O + H(+). It participates in cofactor biosynthesis; pyridoxal 5'-phosphate biosynthesis. Functionally, catalyzes the formation of pyridoxal 5'-phosphate from ribose 5-phosphate (RBP), glyceraldehyde 3-phosphate (G3P) and ammonia. The ammonia is provided by the PdxT subunit. Can also use ribulose 5-phosphate and dihydroxyacetone phosphate as substrates, resulting from enzyme-catalyzed isomerization of RBP and G3P, respectively. This is Pyridoxal 5'-phosphate synthase subunit PdxS from Methanococcus maripaludis (strain C7 / ATCC BAA-1331).